Reading from the N-terminus, the 200-residue chain is Holliday junction branch migration complex subunit RuvA (200 aa).

The domain I stretch occupies residues 1-64 (MYAYFRGELI…EDLMQLYGFI (64 aa)). A domain II region spans residues 65–143 (EEEERQLFLL…KLQQTRPGKT (79 aa)). The tract at residues 144-154 (AGAGSVASLSE) is flexible linker. The domain III stretch occupies residues 154 to 200 (EDALQALMTLGFSRASAQQAVTRALLSAENPGVEDIVREALQNIRNH).

Belongs to the RuvA family. Homotetramer. Forms an RuvA(8)-RuvB(12)-Holliday junction (HJ) complex. HJ DNA is sandwiched between 2 RuvA tetramers; dsDNA enters through RuvA and exits via RuvB. An RuvB hexamer assembles on each DNA strand where it exits the tetramer. Each RuvB hexamer is contacted by two RuvA subunits (via domain III) on 2 adjacent RuvB subunits; this complex drives branch migration. In the full resolvosome a probable DNA-RuvA(4)-RuvB(12)-RuvC(2) complex forms which resolves the HJ.

The protein localises to the cytoplasm. The RuvA-RuvB-RuvC complex processes Holliday junction (HJ) DNA during genetic recombination and DNA repair, while the RuvA-RuvB complex plays an important role in the rescue of blocked DNA replication forks via replication fork reversal (RFR). RuvA specifically binds to HJ cruciform DNA, conferring on it an open structure. The RuvB hexamer acts as an ATP-dependent pump, pulling dsDNA into and through the RuvAB complex. HJ branch migration allows RuvC to scan DNA until it finds its consensus sequence, where it cleaves and resolves the cruciform DNA. This Prosthecochloris aestuarii (strain DSM 271 / SK 413) protein is Holliday junction branch migration complex subunit RuvA.